A 255-amino-acid chain; its full sequence is MNDYIVVKCGGSMLEQLNDVFFDCIKKLQQQYKVVIVHGGGPEIDAKLKDCNINVEKRDGLRVTPKEVMDVVQMVLCGSTNKKFVMNLQKHNLLAVGCSGCDGKLLQVQPVSEEIGYVGEVSYVETALLKGLINMNYIPVIAPIGIHDNEIYNINADTAAAGIAAALSAKELILITDVDGILHEGKLVKKTDESEIATLIEKGVITGGMIPKVQAALASLKMGVQKISIVNGTKDFTEDTGECIGTTVTRGVSIV.

Substrate is bound by residues 40–41 (GG), arginine 62, and asparagine 153.

This sequence belongs to the acetylglutamate kinase family. ArgB subfamily.

Its subcellular location is the cytoplasm. It carries out the reaction N-acetyl-L-glutamate + ATP = N-acetyl-L-glutamyl 5-phosphate + ADP. It functions in the pathway amino-acid biosynthesis; L-arginine biosynthesis; N(2)-acetyl-L-ornithine from L-glutamate: step 2/4. Functionally, catalyzes the ATP-dependent phosphorylation of N-acetyl-L-glutamate. This is Acetylglutamate kinase from Bacillus cereus (strain AH820).